The chain runs to 259 residues: Phosphatidylglycerol--prolipoprotein diacylglyceryl transferase (259 aa).

4 helical membrane-spanning segments follow: residues 9-29, 55-75, 92-112, and 117-137; these read IIFSIGPFSISWYSLSYVVGI, FITYAIIGIIVGGRLGYVLLY, EGGMSFHGATIGIIISAYLFC, and INFLSLTDIITTVVPIGLFLG. Residue Arg-138 participates in a 1,2-diacyl-sn-glycero-3-phospho-(1'-sn-glycerol) binding. 3 consecutive transmembrane segments (helical) span residues 172-192, 201-221, and 228-248; these read QLYEAFFEGLILFCILAYAVF, GLNSGIYLIFYSLFRIIIEMF, and IGFILDSLTMGQILSAPMLLL.

Belongs to the Lgt family.

Its subcellular location is the cell inner membrane. It catalyses the reaction L-cysteinyl-[prolipoprotein] + a 1,2-diacyl-sn-glycero-3-phospho-(1'-sn-glycerol) = an S-1,2-diacyl-sn-glyceryl-L-cysteinyl-[prolipoprotein] + sn-glycerol 1-phosphate + H(+). It functions in the pathway protein modification; lipoprotein biosynthesis (diacylglyceryl transfer). Functionally, catalyzes the transfer of the diacylglyceryl group from phosphatidylglycerol to the sulfhydryl group of the N-terminal cysteine of a prolipoprotein, the first step in the formation of mature lipoproteins. The chain is Phosphatidylglycerol--prolipoprotein diacylglyceryl transferase from Rickettsia typhi (strain ATCC VR-144 / Wilmington).